The chain runs to 173 residues: Large ribosomal subunit protein uL10 (173 aa).

The protein belongs to the universal ribosomal protein uL10 family. Part of the ribosomal stalk of the 50S ribosomal subunit. The N-terminus interacts with L11 and the large rRNA to form the base of the stalk. The C-terminus forms an elongated spine to which L12 dimers bind in a sequential fashion forming a multimeric L10(L12)X complex.

Forms part of the ribosomal stalk, playing a central role in the interaction of the ribosome with GTP-bound translation factors. The sequence is that of Large ribosomal subunit protein uL10 from Bifidobacterium adolescentis (strain ATCC 15703 / DSM 20083 / NCTC 11814 / E194a).